The primary structure comprises 750 residues: Photosystem I P700 chlorophyll a apoprotein A1 (750 aa).

Helical transmembrane passes span 70–93, 156–179, 195–219, 291–309, 346–369, 385–411, 433–455, and 531–549; these read VFSA…FHGA, LYCT…FHYH, LNHH…HVSL, IAHH…GHMY, WHAQ…HHMY, LSLF…IFMV, AIIS…LYIH, and FLVH…LILL. Positions 573 and 582 each coordinate [4Fe-4S] cluster. The next 2 membrane-spanning stretches (helical) occupy residues 589 to 610 and 664 to 686; these read HVFL…HFSW and LSAY…MFLF. A chlorophyll a'-binding site is contributed by H675. Residues M683 and Y691 each contribute to the chlorophyll a site. W692 serves as a coordination point for phylloquinone. The helical transmembrane segment at 724–744 threads the bilayer; it reads AVGVTHYLLGGIATTWAFFLA.

Belongs to the PsaA/PsaB family. As to quaternary structure, the PsaA/B heterodimer binds the P700 chlorophyll special pair and subsequent electron acceptors. PSI consists of a core antenna complex that captures photons, and an electron transfer chain that converts photonic excitation into a charge separation. The eukaryotic PSI reaction center is composed of at least 11 subunits. The cofactor is P700 is a chlorophyll a/chlorophyll a' dimer, A0 is one or more chlorophyll a, A1 is one or both phylloquinones and FX is a shared 4Fe-4S iron-sulfur center..

It localises to the plastid. It is found in the chloroplast thylakoid membrane. The catalysed reaction is reduced [plastocyanin] + hnu + oxidized [2Fe-2S]-[ferredoxin] = oxidized [plastocyanin] + reduced [2Fe-2S]-[ferredoxin]. PsaA and PsaB bind P700, the primary electron donor of photosystem I (PSI), as well as the electron acceptors A0, A1 and FX. PSI is a plastocyanin-ferredoxin oxidoreductase, converting photonic excitation into a charge separation, which transfers an electron from the donor P700 chlorophyll pair to the spectroscopically characterized acceptors A0, A1, FX, FA and FB in turn. Oxidized P700 is reduced on the lumenal side of the thylakoid membrane by plastocyanin. This Arabidopsis thaliana (Mouse-ear cress) protein is Photosystem I P700 chlorophyll a apoprotein A1.